The chain runs to 85 residues: Small ribosomal subunit protein bS20 (85 aa).

Positions 1 to 22 (MANIKSAIKRAKLSEERRAHNA) are disordered.

Belongs to the bacterial ribosomal protein bS20 family.

Its function is as follows. Binds directly to 16S ribosomal RNA. The sequence is that of Small ribosomal subunit protein bS20 from Bacillus cytotoxicus (strain DSM 22905 / CIP 110041 / 391-98 / NVH 391-98).